A 60-amino-acid polypeptide reads, in one-letter code: Metallothionein A (60 aa).

Positions 1–28 (MDPCECSKSGTCNCGGSCTCTNCSCKSC) are beta. A divalent metal cation-binding residues include C4, C6, C12, C14, C18, C20, C23, C25, C28, C32, C33, C35, C36, C40, C43, C47, C49, C54, C58, and C59. The alpha stretch occupies residues 29–60 (KKSCCPCCPSGCTKCASGCVCKGKTCDTSCCQ).

This sequence belongs to the metallothionein superfamily. Type 1 family.

Metallothioneins have a high content of cysteine residues that bind various heavy metals. This Chionodraco rastrospinosus (Ocellated icefish) protein is Metallothionein A (mta).